The primary structure comprises 360 residues: MIIYATAVQTINSFVRLESLKEVYGLIWIFVPIFSLILGIITGVLVIVWLEREISAGIQQRIGPEYAGPLGILQALADGTKLLFKENLRPSRGNPPLFSIGPSIAVISILLSYSVIPFSNHLVLADLNIGIFLWIAISSIAPIGLLMSGYGSNNKYSFLGGLRAAAQSISYEIPLTLCVLSISLLSNSLSTVDIVEAQSKYGFWGWNLWRQPIGFIIFLISSLAECERLPFDLPEAEEELIAGYQTEYSGIKFGLFYVASYLNLLISSLFVTVLYLGGWNISIPYISILELFQRDQIFGTTIGIFITLAKTYLFLFISIATRWTLPRLRMDQLLNLGWKFLLPISLGNLLLTTSFQLFSL.

9 helical membrane passes run 27 to 47, 98 to 118, 129 to 149, 165 to 185, 203 to 223, 248 to 268, 269 to 289, 297 to 317, and 340 to 360; these read IWIF…VLVI, FSIG…VIPF, IGIF…LMSG, AAQS…ISLL, FWGW…ISSL, YSGI…LISS, LFVT…ISIL, IFGT…FLFI, and FLLP…LFSL.

It belongs to the complex I subunit 1 family. As to quaternary structure, NDH is composed of at least 16 different subunits, 5 of which are encoded in the nucleus.

The protein resides in the plastid. Its subcellular location is the chloroplast thylakoid membrane. It carries out the reaction a plastoquinone + NADH + (n+1) H(+)(in) = a plastoquinol + NAD(+) + n H(+)(out). It catalyses the reaction a plastoquinone + NADPH + (n+1) H(+)(in) = a plastoquinol + NADP(+) + n H(+)(out). Functionally, NDH shuttles electrons from NAD(P)H:plastoquinone, via FMN and iron-sulfur (Fe-S) centers, to quinones in the photosynthetic chain and possibly in a chloroplast respiratory chain. The immediate electron acceptor for the enzyme in this species is believed to be plastoquinone. Couples the redox reaction to proton translocation, and thus conserves the redox energy in a proton gradient. The chain is NAD(P)H-quinone oxidoreductase subunit 1, chloroplastic from Barbarea verna (Land cress).